A 119-amino-acid polypeptide reads, in one-letter code: uncharacterized protein (119 aa).

This is an uncharacterized protein from Escherichia coli (strain K12).